A 100-amino-acid polypeptide reads, in one-letter code: Integration host factor subunit alpha (100 aa).

The protein belongs to the bacterial histone-like protein family. Heterodimer of an alpha and a beta chain.

In terms of biological role, this protein is one of the two subunits of integration host factor, a specific DNA-binding protein that functions in genetic recombination as well as in transcriptional and translational control. In Zymomonas mobilis subsp. mobilis (strain ATCC 31821 / ZM4 / CP4), this protein is Integration host factor subunit alpha (ihfA).